We begin with the raw amino-acid sequence, 1032 residues long: Caspase recruitment domain-containing protein 10 (1032 aa).

Disordered stretches follow at residues 1 to 23 (MPGR…SEAE), 253 to 276 (RARG…EPDN), and 481 to 553 (EFPS…MSDI). Ser18 carries the phosphoserine modification. Residues 23–115 (EEDALWERIE…EHFTLLTGQE (93 aa)) form the CARD domain. Residues 138 to 456 (TEVRRLREAR…LEVQLQRAQG (319 aa)) adopt a coiled-coil conformation. 2 stretches are compositionally biased toward basic and acidic residues: residues 261–276 (AEEK…EPDN) and 504–517 (HNSE…KEIN).

As to quaternary structure, CARD10 and BCL10 bind to each other by CARD-CARD interaction. They both participate in a complex with MALT1, where MALT1 binds to BCL10. Interacts with TMEM43; this interaction is essential for EGFR-mediated NF-kappa-B activation. As to expression, detected in adult heart, kidney and liver; lower levels in intestine, placenta, muscle and lung. Also found in fetal lung, liver and kidney.

It is found in the cytoplasm. Functionally, scaffold protein that plays an important role in mediating the activation of NF-kappa-B via BCL10 or EGFR. The sequence is that of Caspase recruitment domain-containing protein 10 (CARD10) from Homo sapiens (Human).